Reading from the N-terminus, the 894-residue chain is Tyrosine-protein kinase receptor UFO (894 aa).

The N-terminal stretch at 1-25 is a signal peptide; the sequence is MAWRCPRMGRVPLAWCLALCGWACM. The tract at residues 26 to 92 is interaction with GAS6; sequence APRGTQAEES…QTQVPLGEDE (67 aa). Residues 26–451 are Extracellular-facing; sequence APRGTQAEES…STPAFSWPWW (426 aa). 2 Ig-like C2-type domains span residues 27–128 and 139–222; these read PRGT…TFVS and PYFL…ATIT. An N-linked (GlcNAc...) asparagine glycan is attached at N43. The cysteines at positions 56 and 117 are disulfide-linked. N157 and N198 each carry an N-linked (GlcNAc...) asparagine glycan. A disulfide bridge links C160 with C205. Fibronectin type-III domains are found at residues 227-331 and 336-428; these read QPRN…TPEG and PPEN…AWRP. N-linked (GlcNAc...) asparagine glycans are attached at residues N339, N345, and N401. The chain crosses the membrane as a helical span at residues 452 to 472; that stretch reads YVLLGAVVAAACVLILALFLV. The Cytoplasmic segment spans residues 473–894; it reads HRRKKETRYG…PAAPGQEDGA (422 aa). The Protein kinase domain occupies 536–807; the sequence is VALGKTLGEG…ELREDLENTL (272 aa). ATP contacts are provided by residues 542 to 550 and K567; that span reads LGEGEFGAV. The active-site Proton acceptor is D672. Phosphotyrosine; by autocatalysis occurs at positions 703, 779, and 821. Disordered regions lie at residues 823 to 853 and 866 to 894; these read NMDE…DSCS and YVLC…EDGA. Y866 is subject to Phosphotyrosine; by autocatalysis. Phosphoserine is present on S884.

This sequence belongs to the protein kinase superfamily. Tyr protein kinase family. AXL/UFO subfamily. As to quaternary structure, heterodimer and heterotetramer with ligand GAS6. Interacts with CBL, GRB2, LCK, NCK2, PIK3R1, PIK3R2, PIK3R3, PLCG1, SOCS1 and TNS2. Part of a complex including AXL, TNK2 and GRB2, in which GRB2 promotes AXL recruitment by TNK2. In terms of processing, monoubiquitinated upon GAS6-binding. A very small proportion of the receptor could be subjected to polyubiquitination in a very transient fashion. Post-translationally, phosphorylated at tyrosine residues by autocatalysis, which activates kinase activity. As to expression, highly expressed in metastatic colon tumors. Expressed in primary colon tumors. Weakly expressed in normal colon tissue.

Its subcellular location is the cell membrane. The catalysed reaction is L-tyrosyl-[protein] + ATP = O-phospho-L-tyrosyl-[protein] + ADP + H(+). Activated by GAS6-binding and subsequent autophosphorylation. Receptor tyrosine kinase that transduces signals from the extracellular matrix into the cytoplasm by binding growth factor GAS6 and which is thus regulating many physiological processes including cell survival, cell proliferation, migration and differentiation. Ligand binding at the cell surface induces dimerization and autophosphorylation of AXL. Following activation by ligand, AXL binds and induces tyrosine phosphorylation of PI3-kinase subunits PIK3R1, PIK3R2 and PIK3R3; but also GRB2, PLCG1, LCK and PTPN11. Other downstream substrate candidates for AXL are CBL, NCK2, SOCS1 and TNS2. Recruitment of GRB2 and phosphatidylinositol 3 kinase regulatory subunits by AXL leads to the downstream activation of the AKT kinase. GAS6/AXL signaling plays a role in various processes such as endothelial cell survival during acidification by preventing apoptosis, optimal cytokine signaling during human natural killer cell development, hepatic regeneration, gonadotropin-releasing hormone neuron survival and migration, platelet activation, or regulation of thrombotic responses. Also plays an important role in inhibition of Toll-like receptors (TLRs)-mediated innate immune response. In terms of biological role, (Microbial infection) Acts as a receptor for lassa virus and lymphocytic choriomeningitis virus, possibly through GAS6 binding to phosphatidyl-serine at the surface of virion envelope. Its function is as follows. (Microbial infection) Acts as a receptor for Ebolavirus, possibly through GAS6 binding to phosphatidyl-serine at the surface of virion envelope. Functionally, (Microbial infection) Promotes Zika virus entry in glial cells, Sertoli cells and astrocytes. Additionally, Zika virus potentiates AXL kinase activity to antagonize type I interferon signaling and thereby promotes infection. Interferon signaling inhibition occurs via an SOCS1-dependent mechanism. This chain is Tyrosine-protein kinase receptor UFO (AXL), found in Homo sapiens (Human).